A 493-amino-acid polypeptide reads, in one-letter code: NADH-quinone oxidoreductase subunit N 2 (493 aa).

A run of 14 helical transmembrane segments spans residues 16–36, 45–65, 87–107, 119–139, 141–161, 176–196, 219–239, 258–278, 285–305, 313–333, 340–360, 385–405, 421–441, and 464–484; these read IIPAVMLALFGCAILLFDFLI, FLLIFVVLAEAFTGFGLFRQQ, GFAIFFNWIFLVAAVVVAIVS, GEYYSLILFAQCGMYFLATGT, LITLFIGLELMALCFYVMVGF, LLLGAFSSGFLVYGFSVMYGI, VFLALSTTSVGLLFKVSAVPF, LSVASKAASIAFLLRIFLGPL, WEPLLAFIAIITLTIGNLAAI, LLAYSSISHAGYMLLGLVAGN, IAVYVMVYTFMNLGAFLVIIA, AFLMLIFLLSLAGIPPTAGFL, GLAIVATLYVAVAIYYYFKIV, and CALALTGIATLAIGIYPEPFL.

It belongs to the complex I subunit 2 family. In terms of assembly, NDH-1 is composed of 14 different subunits. Subunits NuoA, H, J, K, L, M, N constitute the membrane sector of the complex.

It localises to the cell inner membrane. The enzyme catalyses a quinone + NADH + 5 H(+)(in) = a quinol + NAD(+) + 4 H(+)(out). Functionally, NDH-1 shuttles electrons from NADH, via FMN and iron-sulfur (Fe-S) centers, to quinones in the respiratory chain. The immediate electron acceptor for the enzyme in this species is believed to be ubiquinone. Couples the redox reaction to proton translocation (for every two electrons transferred, four hydrogen ions are translocated across the cytoplasmic membrane), and thus conserves the redox energy in a proton gradient. This chain is NADH-quinone oxidoreductase subunit N 2, found in Solibacter usitatus (strain Ellin6076).